The sequence spans 373 residues: Dual-specificity RNA methyltransferase RlmN (373 aa).

The Proton acceptor role is filled by E91. The 243-residue stretch at 97-339 (EDDRGTLCIS…TTVRKTRGDD (243 aa)) folds into the Radical SAM core domain. An intrachain disulfide couples C104 to C344. Residues C111, C115, and C118 each coordinate [4Fe-4S] cluster. S-adenosyl-L-methionine contacts are provided by residues 165–166 (GE), S197, 219–221 (SLH), and N301. C344 serves as the catalytic S-methylcysteine intermediate.

This sequence belongs to the radical SAM superfamily. RlmN family. Requires [4Fe-4S] cluster as cofactor.

The protein resides in the cytoplasm. The enzyme catalyses adenosine(2503) in 23S rRNA + 2 reduced [2Fe-2S]-[ferredoxin] + 2 S-adenosyl-L-methionine = 2-methyladenosine(2503) in 23S rRNA + 5'-deoxyadenosine + L-methionine + 2 oxidized [2Fe-2S]-[ferredoxin] + S-adenosyl-L-homocysteine. It catalyses the reaction adenosine(37) in tRNA + 2 reduced [2Fe-2S]-[ferredoxin] + 2 S-adenosyl-L-methionine = 2-methyladenosine(37) in tRNA + 5'-deoxyadenosine + L-methionine + 2 oxidized [2Fe-2S]-[ferredoxin] + S-adenosyl-L-homocysteine. Its function is as follows. Specifically methylates position 2 of adenine 2503 in 23S rRNA and position 2 of adenine 37 in tRNAs. m2A2503 modification seems to play a crucial role in the proofreading step occurring at the peptidyl transferase center and thus would serve to optimize ribosomal fidelity. This chain is Dual-specificity RNA methyltransferase RlmN, found in Paracidovorax citrulli (strain AAC00-1) (Acidovorax citrulli).